We begin with the raw amino-acid sequence, 610 residues long: Calcium-dependent protein kinase 1 (610 aa).

Gly2 carries the N-myristoyl glycine lipid modification. The S-palmitoyl cysteine moiety is linked to residue Cys5. A disordered region spans residues 17–133 (VSAAMWRPRD…HMKRVSSAGL (117 aa)). Composition is skewed to basic and acidic residues over residues 47-56 (LRSRLSDEVQ) and 70-117 (TDVE…DPPA). The span at 118-127 (KPKKPKHMKR) shows a compositional bias: basic residues. In terms of domain architecture, Protein kinase spans 150-408 (YSLGRKLGQG…AHQVLCHPWV (259 aa)). ATP is bound by residues 156 to 164 (LGQGQFGTT) and Lys179. Catalysis depends on Asp274, which acts as the Proton acceptor. Ser314 bears the Phosphoserine mark. The autoinhibitory domain stretch occupies residues 414-444 (APDKPLDSAVLSRMKQFSAMNKFKKMALRVI). 4 consecutive EF-hand domains span residues 451–486 (EEIA…VGAN), 487–522 (LKES…LNKI), 523–558 (ERED…FGVE), and 559–592 (DVRI…GSIT). The Ca(2+) site is built by Asp464, Asp466, Ser468, Gln470, Glu475, Asp500, Asp502, Ser504, Thr506, Glu511, Asp536, Asp538, Ser540, Tyr542, Glu547, Asp570, Asp572, Asp574, Arg576, and Glu581.

This sequence belongs to the protein kinase superfamily. Ser/Thr protein kinase family. CDPK subfamily. As to quaternary structure, interacts with 14-3-3 proteins.

It localises to the peroxisome membrane. The catalysed reaction is L-seryl-[protein] + ATP = O-phospho-L-seryl-[protein] + ADP + H(+). It catalyses the reaction L-threonyl-[protein] + ATP = O-phospho-L-threonyl-[protein] + ADP + H(+). With respect to regulation, activated by calcium. Autophosphorylation may play an important role in the regulation of the kinase activity. In terms of biological role, may play a role in signal transduction pathways that involve calcium as a second messenger. Phosphorylates the Ca(2+)-ATPase ACA2 resulting in the inhibition of its calcium activation. The protein is Calcium-dependent protein kinase 1 (CPK1) of Arabidopsis thaliana (Mouse-ear cress).